Consider the following 657-residue polypeptide: Wall-associated receptor kinase-like 20 (657 aa).

The first 23 residues, 1 to 23 (MEKKRSYYALLIPTLLTVWLACA), serve as a signal peptide directing secretion. At 24-293 (GHSCARHAKA…KHCKKKKKTV (270 aa)) the chain is on the extracellular side. An N-linked (GlcNAc...) asparagine glycan is attached at Asn140. A helical membrane pass occupies residues 294–314 (VFAGAAVAVVGVTLAIAVAVI). Residues 315–657 (GTKHSHQKVK…NILSQEVTET (343 aa)) lie on the Cytoplasmic side of the membrane. Positions 363 to 646 (FSKDNLIGTG…KEVADEIEYI (284 aa)) constitute a Protein kinase domain. ATP contacts are provided by residues 369 to 377 (IGTGGFGEV) and Lys391. Asp490 (proton acceptor) is an active-site residue.

The protein belongs to the protein kinase superfamily. Ser/Thr protein kinase family.

The protein localises to the membrane. It catalyses the reaction L-seryl-[protein] + ATP = O-phospho-L-seryl-[protein] + ADP + H(+). The enzyme catalyses L-threonyl-[protein] + ATP = O-phospho-L-threonyl-[protein] + ADP + H(+). In terms of biological role, serine/threonine-protein kinase that may function as a signaling receptor of extracellular matrix component. This Arabidopsis thaliana (Mouse-ear cress) protein is Wall-associated receptor kinase-like 20 (WAKL20).